The following is a 279-amino-acid chain: Tryptophan synthase alpha chain (279 aa).

Catalysis depends on proton acceptor residues Glu-50 and Asp-61.

It belongs to the TrpA family. Tetramer of two alpha and two beta chains.

The enzyme catalyses (1S,2R)-1-C-(indol-3-yl)glycerol 3-phosphate + L-serine = D-glyceraldehyde 3-phosphate + L-tryptophan + H2O. The protein operates within amino-acid biosynthesis; L-tryptophan biosynthesis; L-tryptophan from chorismate: step 5/5. Functionally, the alpha subunit is responsible for the aldol cleavage of indoleglycerol phosphate to indole and glyceraldehyde 3-phosphate. This is Tryptophan synthase alpha chain from Rhizobium rhizogenes (strain K84 / ATCC BAA-868) (Agrobacterium radiobacter).